The following is a 426-amino-acid chain: MTDSENESTETDSLMTFDDYISKELPEHLQRLIMENLKGSTTNDLKQTSNNSEFNVSKNGSFKGLDDAIQALQMQSVLHPSSLGSLATSSKFSGWSFAQGFFVGQLSIVLLFIFFLKFFIFSDEPSKSKNPKPAASRHRSKFKEYPFISREFLTSLVRKGAKQHYELNEEAENEHLQELALILEKTYYNVDVHPAESLDWFNVLVAQIIQQFRSEAWHRDNILHSLNDFIGRKSPDLPEYLDTIKITELDTGDDFPIFSNCRIQYSPNSGNKKLEAKIDIDLNDHLTLGVETKLLLNYPKPGIAALPINLVVSIVRFQACLTVSLTNAEEFASTSNGSSSENGMEGNSGYFLMFSFSPEYRMEFEIKSLIGSRSKLENIPKIGSVIEYQIKKWFVERCVEPRFQFVRLPSMWPRSKNTREEKPTEL.

Over 1-100 (MTDSENESTE…KFSGWSFAQG (100 aa)) the chain is Lumenal. The helical transmembrane segment at 101 to 121 (FFVGQLSIVLLFIFFLKFFIF) threads the bilayer. Residues 122–426 (SDEPSKSKNP…NTREEKPTEL (305 aa)) lie on the Cytoplasmic side of the membrane. The SMP-LTD domain maps to 194–409 (PAESLDWFNV…EPRFQFVRLP (216 aa)).

It belongs to the MMM1 family. As to quaternary structure, homodimer. Component of the ER-mitochondria encounter structure (ERMES) or MDM complex, composed of MMM1, MDM10, MDM12 and MDM34. An MMM1 homodimer associates with one molecule of MDM12 on each side in a pairwise head-to-tail manner, and the SMP-LTD domains of MMM1 and MDM12 generate a continuous hydrophobic tunnel for phospholipid trafficking.

The protein localises to the endoplasmic reticulum membrane. Component of the ERMES/MDM complex, which serves as a molecular tether to connect the endoplasmic reticulum (ER) and mitochondria. Components of this complex are involved in the control of mitochondrial shape and protein biogenesis, and function in nonvesicular lipid trafficking between the ER and mitochondria. The MDM12-MMM1 subcomplex functions in the major beta-barrel assembly pathway that is responsible for biogenesis of all outer membrane beta-barrel proteins, and acts in a late step after the SAM complex. The MDM10-MDM12-MMM1 subcomplex further acts in the TOM40-specific pathway after the action of the MDM12-MMM1 complex. Essential for establishing and maintaining the structure of mitochondria and maintenance of mtDNA nucleoids. This Saccharomyces cerevisiae (strain AWRI1631) (Baker's yeast) protein is Maintenance of mitochondrial morphology protein 1.